The chain runs to 399 residues: MAREKFERNKPHVNIGTIGHVDHGKTTLTAAITNVLAKKGQAQAQDYGDIDGAPEERERGITINTAHVEYETEGRHYAHVDCPGHADYVKNMITGAAQMDGAILVCAATDGPMAQTKEHILLAKQVGVPALVVALNKCDMVDDEEIIELVEMEIRELLDSYDFPGDDIPIVQVSGLKALEGDSTWESKIEELMKAVDASIPEPEREVDKPFLMAVEDVFSITGRGTVATGRIERGKVKVGEEVEIVGIRDTRLTTVTGVEMFRKLLDEGMAGDNVGLLLRGVQKEDIERGMVLVKKGSITPHTQFEGEVYVLKKEEGGRHTPFFAGYRPQFYIRTTDVTGQITAFTSDDGSNVEMVMPGDRIKMTGELICPVAIEQGMRFAIREGGRTIGAGVVSKIIK.

In terms of domain architecture, tr-type G spans 10–204; sequence KPHVNIGTIG…AVDASIPEPE (195 aa). The G1 stretch occupies residues 19–26; sequence GHVDHGKT. GTP is bound at residue 19 to 26; that stretch reads GHVDHGKT. Thr26 serves as a coordination point for Mg(2+). A G2 region spans residues 60-64; the sequence is GITIN. A G3 region spans residues 81-84; sequence DCPG. GTP-binding positions include 81 to 85 and 136 to 139; these read DCPGH and NKCD. The segment at 136 to 139 is G4; sequence NKCD. The G5 stretch occupies residues 174–176; it reads SGL.

This sequence belongs to the TRAFAC class translation factor GTPase superfamily. Classic translation factor GTPase family. EF-Tu/EF-1A subfamily. In terms of assembly, monomer.

The protein resides in the cytoplasm. The catalysed reaction is GTP + H2O = GDP + phosphate + H(+). In terms of biological role, GTP hydrolase that promotes the GTP-dependent binding of aminoacyl-tRNA to the A-site of ribosomes during protein biosynthesis. This is Elongation factor Tu from Prochlorococcus marinus (strain MIT 9215).